A 376-amino-acid chain; its full sequence is GTPase Obg (376 aa).

One can recognise an Obg domain in the interval Met1–Ile158. The OBG-type G domain maps to Ala159–Lys359. GTP is bound by residues Gly165 to Ser172, Phe190 to Thr194, Asp212 to Gly215, Thr280 to Asp283, and Ser340 to Ala342. 2 residues coordinate Mg(2+): Ser172 and Thr192.

The protein belongs to the TRAFAC class OBG-HflX-like GTPase superfamily. OBG GTPase family. As to quaternary structure, monomer. The cofactor is Mg(2+).

The protein resides in the cytoplasm. In terms of biological role, an essential GTPase which binds GTP, GDP and possibly (p)ppGpp with moderate affinity, with high nucleotide exchange rates and a fairly low GTP hydrolysis rate. Plays a role in control of the cell cycle, stress response, ribosome biogenesis and in those bacteria that undergo differentiation, in morphogenesis control. The sequence is that of GTPase Obg from Campylobacter curvus (strain 525.92).